The following is a 177-amino-acid chain: Large ribosomal subunit protein uL6 (177 aa).

This sequence belongs to the universal ribosomal protein uL6 family. As to quaternary structure, part of the 50S ribosomal subunit.

In terms of biological role, this protein binds to the 23S rRNA, and is important in its secondary structure. It is located near the subunit interface in the base of the L7/L12 stalk, and near the tRNA binding site of the peptidyltransferase center. The sequence is that of Large ribosomal subunit protein uL6 from Latilactobacillus sakei subsp. sakei (strain 23K) (Lactobacillus sakei subsp. sakei).